The chain runs to 171 residues: Translation initiation factor IF-3 (171 aa).

This sequence belongs to the IF-3 family. Monomer.

Its subcellular location is the cytoplasm. IF-3 binds to the 30S ribosomal subunit and shifts the equilibrium between 70S ribosomes and their 50S and 30S subunits in favor of the free subunits, thus enhancing the availability of 30S subunits on which protein synthesis initiation begins. This Thermus thermophilus (strain ATCC BAA-163 / DSM 7039 / HB27) protein is Translation initiation factor IF-3.